We begin with the raw amino-acid sequence, 157 residues long: S-ribosylhomocysteine lyase (157 aa).

Positions 54, 58, and 124 each coordinate Fe cation.

It belongs to the LuxS family. Homodimer. Requires Fe cation as cofactor.

It carries out the reaction S-(5-deoxy-D-ribos-5-yl)-L-homocysteine = (S)-4,5-dihydroxypentane-2,3-dione + L-homocysteine. Functionally, involved in the synthesis of autoinducer 2 (AI-2) which is secreted by bacteria and is used to communicate both the cell density and the metabolic potential of the environment. The regulation of gene expression in response to changes in cell density is called quorum sensing. Catalyzes the transformation of S-ribosylhomocysteine (RHC) to homocysteine (HC) and 4,5-dihydroxy-2,3-pentadione (DPD). This Lacticaseibacillus paracasei (strain ATCC 334 / BCRC 17002 / CCUG 31169 / CIP 107868 / KCTC 3260 / NRRL B-441) (Lactobacillus paracasei) protein is S-ribosylhomocysteine lyase.